The sequence spans 1066 residues: TBC1 domain family member 31 (1066 aa).

7 WD repeats span residues 33 to 74 (HNTS…LHGN), 75 to 116 (RFNL…TVTK), 117 to 157 (ELVS…LDTF), 158 to 200 (QRKR…CDTL), 201 to 248 (FCKY…ARQL), 249 to 296 (FRII…MQTC), and 297 to 334 (KLLF…NIYS). A Rab-GAP TBC domain is found at 424-599 (EYPTKYRMFI…KLFDNIFSNH (176 aa)). 2 coiled-coil regions span residues 728 to 861 (QKQE…DLEE) and 914 to 948 (NKCY…KWKE). A compositionally biased stretch (basic and acidic residues) spans 989-998 (CHKEEPRFQN). Residues 989-1020 (CHKEEPRFQNEQDSSCLPRTSQLNDSSEMDPS) are disordered. The segment covering 999-1020 (EQDSSCLPRTSQLNDSSEMDPS) has biased composition (polar residues). The tract at residues 1053–1056 (RARH) is mediates direct interaction with PJA2.

Interacts with PJA2; the interaction is direct and recruits PJA2 to centrosomes. Interacts with OFD1; regulates its activity in cilium assembly. Interacts with PRKACA.

The protein resides in the cytoplasm. Its subcellular location is the cytoskeleton. It localises to the microtubule organizing center. The protein localises to the centrosome. It is found in the centriolar satellite. The protein resides in the cilium basal body. Molecular adapter which is involved in cilium biogenesis. Part of a functional complex including OFD1 a centriolar protein involved in cilium assembly. Could regulate the cAMP-dependent phosphorylation of OFD1, and its subsequent ubiquitination by PJA2 which ultimately leads to its proteasomal degradation. In Homo sapiens (Human), this protein is TBC1 domain family member 31.